The following is a 321-amino-acid chain: Cilia- and flagella-associated protein 161 (321 aa).

Residues 275–321 (LSTMLDLPKPPAEDTRALEQEREQVSDPGARSTPDARGCVPQCTLPM) form a disordered region. Residues 285 to 299 (PAEDTRALEQEREQV) show a composition bias toward basic and acidic residues.

As to quaternary structure, microtubule inner protein component of sperm flagellar doublet microtubules. Expressed in trachea multiciliated cells.

It is found in the cytoplasm. Its subcellular location is the cytoskeleton. The protein localises to the cilium axoneme. It localises to the flagellum axoneme. Microtubule inner protein (MIP) part of the dynein-decorated doublet microtubules (DMTs) in cilia axoneme, which is required for motile cilia beating. The chain is Cilia- and flagella-associated protein 161 from Bos taurus (Bovine).